Reading from the N-terminus, the 60-residue chain is Toxin TdNa2 (60 aa).

Positions 1 to 59 constitute an LCN-type CS-alpha/beta domain; sequence RDAYPADWRGCKPSCPWGSSSWCNEECTSLGGSSGYCAWPACWCYGLPDSVRYYNNKCH. Cystine bridges form between Cys11/Cys58, Cys15/Cys37, Cys23/Cys42, and Cys27/Cys44.

Belongs to the long (4 C-C) scorpion toxin superfamily. Sodium channel inhibitor family. Beta subfamily. In terms of tissue distribution, expressed by the venom gland.

The protein localises to the secreted. Inhibits the sodium currents (Nav) in an apparent irreversible manner. Produces small depolarization and induces repetitive firing in squid axons. Is specific for arthropods (crickets, triatomides, crabs and squids), but is non-toxic to mice. The chain is Toxin TdNa2 from Tityus discrepans (Venezuelan scorpion).